The sequence spans 124 residues: Small ribosomal subunit protein uS12 (124 aa).

3-methylthioaspartic acid is present on aspartate 89.

Belongs to the universal ribosomal protein uS12 family. As to quaternary structure, part of the 30S ribosomal subunit. Contacts proteins S8 and S17. May interact with IF1 in the 30S initiation complex.

In terms of biological role, with S4 and S5 plays an important role in translational accuracy. Its function is as follows. Interacts with and stabilizes bases of the 16S rRNA that are involved in tRNA selection in the A site and with the mRNA backbone. Located at the interface of the 30S and 50S subunits, it traverses the body of the 30S subunit contacting proteins on the other side and probably holding the rRNA structure together. The combined cluster of proteins S8, S12 and S17 appears to hold together the shoulder and platform of the 30S subunit. The sequence is that of Small ribosomal subunit protein uS12 from Yersinia pestis (strain Pestoides F).